The primary structure comprises 261 residues: Ribonuclease PH (261 aa).

Phosphate contacts are provided by residues Arg-87 and 125 to 127 (GTR).

Belongs to the RNase PH family. As to quaternary structure, homohexameric ring arranged as a trimer of dimers.

It carries out the reaction tRNA(n+1) + phosphate = tRNA(n) + a ribonucleoside 5'-diphosphate. Its function is as follows. Phosphorolytic 3'-5' exoribonuclease that plays an important role in tRNA 3'-end maturation. Removes nucleotide residues following the 3'-CCA terminus of tRNAs; can also add nucleotides to the ends of RNA molecules by using nucleoside diphosphates as substrates, but this may not be physiologically important. Probably plays a role in initiation of 16S rRNA degradation (leading to ribosome degradation) during starvation. The chain is Ribonuclease PH from Caldanaerobacter subterraneus subsp. tengcongensis (strain DSM 15242 / JCM 11007 / NBRC 100824 / MB4) (Thermoanaerobacter tengcongensis).